Consider the following 516-residue polypeptide: Protein psiC (516 aa).

The first 19 residues, 1–19, serve as a signal peptide directing secretion; it reads MKILILSFFLILGINLVFC. The PA14 domain occupies 109 to 249; sequence ESKDEPGIYV…YDACGVCLGK (141 aa). 7 N-linked (GlcNAc...) asparagine glycosylation sites follow: Asn-134, Asn-234, Asn-250, Asn-284, Asn-333, Asn-357, and Asn-367. Residues 418-427 are compositionally biased toward low complexity; the sequence is DIIIDSSSDI. The segment at 418 to 465 is disordered; that stretch reads DIIIDSSSDIPIPTLSPSPQPSRFPTDTPTNTPMPPTRPPTPTEDPKI. The span at 449-460 shows a compositional bias: pro residues; the sequence is TPMPPTRPPTPT.

The protein belongs to the prespore-cell-inducing factor family.

The protein resides in the secreted. This chain is Protein psiC (psiC), found in Dictyostelium discoideum (Social amoeba).